We begin with the raw amino-acid sequence, 105 residues long: CRISPR-associated endoribonuclease Cas2 1 (105 aa).

D20 is a Mg(2+) binding site.

This sequence belongs to the CRISPR-associated endoribonuclease Cas2 protein family. As to quaternary structure, homodimer, forms a heterotetramer with a Cas1 homodimer. It depends on Mg(2+) as a cofactor.

Functionally, CRISPR (clustered regularly interspaced short palindromic repeat), is an adaptive immune system that provides protection against mobile genetic elements (viruses, transposable elements and conjugative plasmids). CRISPR clusters contain sequences complementary to antecedent mobile elements and target invading nucleic acids. CRISPR clusters are transcribed and processed into CRISPR RNA (crRNA). Functions as a ssRNA-specific endoribonuclease. Involved in the integration of spacer DNA into the CRISPR cassette. The chain is CRISPR-associated endoribonuclease Cas2 1 (cas21) from Nitrosomonas europaea (strain ATCC 19718 / CIP 103999 / KCTC 2705 / NBRC 14298).